The chain runs to 484 residues: Siroheme synthase 1 (484 aa).

Residues 1-205 are precorrin-2 dehydrogenase /sirohydrochlorin ferrochelatase; it reads MHHYPIFLKL…GREAEGEAEL (205 aa). NAD(+) contacts are provided by residues 22-23 and 43-44; these read EA and PV. At Ser130 the chain carries Phosphoserine. A uroporphyrinogen-III C-methyltransferase region spans residues 220–484; that stretch reads GEVFLVGAGP…DPCWTGGMRD (265 aa). Pro229 is a binding site for S-adenosyl-L-methionine. Asp252 (proton acceptor) is an active-site residue. Residue Lys274 is the Proton donor of the active site. Residues 305–307, Leu310, 335–336, Met387, and Ala416 contribute to the S-adenosyl-L-methionine site; these read GGD and SA.

In the N-terminal section; belongs to the precorrin-2 dehydrogenase / sirohydrochlorin ferrochelatase family. The protein in the C-terminal section; belongs to the precorrin methyltransferase family.

The catalysed reaction is uroporphyrinogen III + 2 S-adenosyl-L-methionine = precorrin-2 + 2 S-adenosyl-L-homocysteine + H(+). It carries out the reaction precorrin-2 + NAD(+) = sirohydrochlorin + NADH + 2 H(+). It catalyses the reaction siroheme + 2 H(+) = sirohydrochlorin + Fe(2+). It functions in the pathway cofactor biosynthesis; adenosylcobalamin biosynthesis; precorrin-2 from uroporphyrinogen III: step 1/1. The protein operates within cofactor biosynthesis; adenosylcobalamin biosynthesis; sirohydrochlorin from precorrin-2: step 1/1. Its pathway is porphyrin-containing compound metabolism; siroheme biosynthesis; precorrin-2 from uroporphyrinogen III: step 1/1. It participates in porphyrin-containing compound metabolism; siroheme biosynthesis; siroheme from sirohydrochlorin: step 1/1. It functions in the pathway porphyrin-containing compound metabolism; siroheme biosynthesis; sirohydrochlorin from precorrin-2: step 1/1. Its function is as follows. Multifunctional enzyme that catalyzes the SAM-dependent methylations of uroporphyrinogen III at position C-2 and C-7 to form precorrin-2 via precorrin-1. Then it catalyzes the NAD-dependent ring dehydrogenation of precorrin-2 to yield sirohydrochlorin. Finally, it catalyzes the ferrochelation of sirohydrochlorin to yield siroheme. This Halorhodospira halophila (strain DSM 244 / SL1) (Ectothiorhodospira halophila (strain DSM 244 / SL1)) protein is Siroheme synthase 1.